The sequence spans 152 residues: Maintenance of carboxysome distribution protein B (152 aa).

In terms of assembly, self-associates, interacts with McdA probably via the C-terminus of both proteins. Homohexamerizes. Probably a trimer of dimers. Interacts with most of the shell components of the carboxysome (CcmK2, CcmK3, CcmK4, CcmL and CcmO, but not CcmP) via its C-terminus.

The protein resides in the carboxysome. Functionally, mcdA and McdB together mediate carboxysome (Cb) spacing, size, ultrastructure and probably inheritance in the cell. Together they prevent Cb aggregation. McdA is an ATPase that forms dynamic gradients on the nucleoid in response to adapter protein McdB, which associates with carboxysomes. The interplay between McdA gradients on the nucleoid and McdB-bound carboxysomes result in the equal spacing of Cbs along the cell length. McdB may have an additional function in cell divison. Stimulates the ATPase activity of McdA, causing McdA to be released from DNA. Overexpression leads to loss of McdA oscillation and formation of large Cb aggregates which colocalize with McdB, as well as diffuse McdB staining in the cytoplasm. Undergoes liquid-liquid phase separation between pH 6.5-7.5 and at concentrations between 1 uM and 167 uM. Forms polar foci upon overexpression in E.coli. Incorrect positioning (aggregation) of carboxysomes results in reduced CO(2) fixation by encapsulated RuBisCO, which leads to slower growth, cell elongation, asymmetric cell division and an increase in RuBisCO levels. The chain is Maintenance of carboxysome distribution protein B from Synechococcus elongatus (strain ATCC 33912 / PCC 7942 / FACHB-805) (Anacystis nidulans R2).